A 174-amino-acid chain; its full sequence is Ribosome maturation factor RimM (174 aa).

In terms of domain architecture, PRC barrel spans 99–172; that stretch reads ADEFFYHDVI…RLVIRPIAGL (74 aa).

This sequence belongs to the RimM family. As to quaternary structure, binds ribosomal protein uS19.

The protein resides in the cytoplasm. In terms of biological role, an accessory protein needed during the final step in the assembly of 30S ribosomal subunit, possibly for assembly of the head region. Essential for efficient processing of 16S rRNA. May be needed both before and after RbfA during the maturation of 16S rRNA. It has affinity for free ribosomal 30S subunits but not for 70S ribosomes. The sequence is that of Ribosome maturation factor RimM from Chloroflexus aurantiacus (strain ATCC 29366 / DSM 635 / J-10-fl).